The primary structure comprises 272 residues: 3-hydroxyanthranilate 3,4-dioxygenase (272 aa).

The tract at residues 1-154 (MMEWIDENSS…SEEHKTGKPS (154 aa)) is domain A (catalytic). Arginine 38 contributes to the O2 binding site. The Fe cation site is built by histidine 42, glutamate 48, and histidine 86. Residue glutamate 48 participates in substrate binding. Residues arginine 90 and glutamate 100 each coordinate substrate. The segment at 155–169 (KESSCSINVDTETEL) is linker. The interval 170-272 (MEPFPLKQWL…SITVDSLANK (103 aa)) is domain B.

It belongs to the 3-HAO family. Fe(2+) is required as a cofactor.

It localises to the cytoplasm. It carries out the reaction 3-hydroxyanthranilate + O2 = (2Z,4Z)-2-amino-3-carboxymuconate 6-semialdehyde. Its pathway is cofactor biosynthesis; NAD(+) biosynthesis; quinolinate from L-kynurenine: step 3/3. Catalyzes the oxidative ring opening of 3-hydroxyanthranilate to 2-amino-3-carboxymuconate semialdehyde, which spontaneously cyclizes to quinolinate. In Nematostella vectensis (Starlet sea anemone), this protein is 3-hydroxyanthranilate 3,4-dioxygenase.